Reading from the N-terminus, the 342-residue chain is Protein rough sheath 2 homolog (342 aa).

HTH myb-type domains lie at 1–58 and 59–113; these read MQPP…KNYL and RPGI…EKQQ. DNA-binding regions (H-T-H motif) lie at residues 32–58 and 86–109; these read WSLVSQRMNRPLHRDAKSCLERWKNYL and WKKIAAEVPGRTAKRLGKWWEVFK. Residues 253 to 304 are a coiled coil; sequence RRREATEEFEAKMRALREEQAAAVERVEAEYREKMAGLRRDAEAKEQKMAEQ.

The protein localises to the nucleus. Transcription factor required for normal cell differentiation. May interact with other proteins to repress the knox homeobox genes. The protein is Protein rough sheath 2 homolog (RS2) of Oryza sativa subsp. japonica (Rice).